The primary structure comprises 343 residues: Ribosomal RNA small subunit methyltransferase C (343 aa).

Belongs to the methyltransferase superfamily. RsmC family. In terms of assembly, monomer.

It localises to the cytoplasm. The catalysed reaction is guanosine(1207) in 16S rRNA + S-adenosyl-L-methionine = N(2)-methylguanosine(1207) in 16S rRNA + S-adenosyl-L-homocysteine + H(+). Functionally, specifically methylates the guanine in position 1207 of 16S rRNA in the 30S particle. This is Ribosomal RNA small subunit methyltransferase C from Escherichia coli O7:K1 (strain IAI39 / ExPEC).